Reading from the N-terminus, the 1274-residue chain is Meiosis inhibitor protein 1 (1274 aa).

Expressed predominantly in testis. Weakly expressed in spleen and thymus. Expressed in the ovaries, Fallopian tubes and uterus.

In terms of biological role, required for normal meiotic chromosome synapsis. May be involved in the formation of meiotic double-strand breaks (DSBs) in spermatocytes. This Homo sapiens (Human) protein is Meiosis inhibitor protein 1.